The following is a 353-amino-acid chain: Protein RecA (353 aa).

Gly67–Thr74 lines the ATP pocket. The disordered stretch occupies residues Ser330–Phe353. A compositionally biased stretch (acidic residues) spans Ser339–Phe353.

It belongs to the RecA family.

The protein resides in the cytoplasm. In terms of biological role, can catalyze the hydrolysis of ATP in the presence of single-stranded DNA, the ATP-dependent uptake of single-stranded DNA by duplex DNA, and the ATP-dependent hybridization of homologous single-stranded DNAs. It interacts with LexA causing its activation and leading to its autocatalytic cleavage. This is Protein RecA from Shigella sonnei.